Here is a 456-residue protein sequence, read N- to C-terminus: UDP-N-acetylmuramoylalanine--D-glutamate ligase (456 aa).

An ATP-binding site is contributed by 122–128; that stretch reads GSNGKST.

It belongs to the MurCDEF family.

The protein resides in the cytoplasm. It catalyses the reaction UDP-N-acetyl-alpha-D-muramoyl-L-alanine + D-glutamate + ATP = UDP-N-acetyl-alpha-D-muramoyl-L-alanyl-D-glutamate + ADP + phosphate + H(+). It functions in the pathway cell wall biogenesis; peptidoglycan biosynthesis. Its function is as follows. Cell wall formation. Catalyzes the addition of glutamate to the nucleotide precursor UDP-N-acetylmuramoyl-L-alanine (UMA). This Saccharophagus degradans (strain 2-40 / ATCC 43961 / DSM 17024) protein is UDP-N-acetylmuramoylalanine--D-glutamate ligase.